The chain runs to 265 residues: Transcription factor Spi-B-like (265 aa).

Residues 1–31 (MLTLEASQLDGPHPSYMFSDSSFYDLDSCKP) form a TAD1 (Acidic) region. The interval 42 to 63 (AEPPTDPCAGWLELAEPGYEPF) is TAD2. Residues 127-160 (TPLSEDDDFPTDAPALEVSDSDSDENLSPGGSLD) are disordered. Positions 169–252 (LRLYQFLLGL…VKKKLTYQFG (84 aa)) form a DNA-binding region, ETS.

This sequence belongs to the ETS family.

It localises to the nucleus. May act as a sequence specific transcriptional activator. The chain is Transcription factor Spi-B-like from Paleosuchus palpebrosus (Cuvier's smooth-fronted caiman).